A 201-amino-acid polypeptide reads, in one-letter code: 3-isopropylmalate dehydratase small subunit (201 aa).

It belongs to the LeuD family. LeuD type 1 subfamily. As to quaternary structure, heterodimer of LeuC and LeuD.

The catalysed reaction is (2R,3S)-3-isopropylmalate = (2S)-2-isopropylmalate. The protein operates within amino-acid biosynthesis; L-leucine biosynthesis; L-leucine from 3-methyl-2-oxobutanoate: step 2/4. Its function is as follows. Catalyzes the isomerization between 2-isopropylmalate and 3-isopropylmalate, via the formation of 2-isopropylmaleate. The sequence is that of 3-isopropylmalate dehydratase small subunit from Shigella dysenteriae serotype 1 (strain Sd197).